Here is a 191-residue protein sequence, read N- to C-terminus: C-type lectin domain family 2 member D (191 aa).

At 1–38 (MHDSNNVEKDITPSELPANPGCLHSKEHSIKATLIWRL) the chain is on the cytoplasmic side. The helical; Signal-anchor for type II membrane protein transmembrane segment at 39–59 (FFLIMFLTIIVCGMVAALSAI) threads the bilayer. The Extracellular portion of the chain corresponds to 60 to 191 (RANCHQEPSV…WICSKSDIHV (132 aa)). A disulfide bridge connects residues Cys-75 and Cys-86. Residues 82-185 (FQRKCFYFSD…HYTERKWICS (104 aa)) form the C-type lectin domain. N-linked (GlcNAc...) asparagine glycans are attached at residues Asn-95 and Asn-147. Cys-103 and Cys-184 are joined by a disulfide.

In terms of assembly, homodimer; disulfide-linked. In terms of processing, N-glycosylated. Detected in peripheral blood leukocytes, osteoblasts, lymph node, thymus and spleen. Isoform 1, isoform 2 and isoform 4 are expressed in T- and B-lymphocytes, and at lower levels in NK cells. They are also expressed in B-cell lines and LPS-matured monocyte-derived dendritic cells.

Its subcellular location is the cell membrane. The protein resides in the endoplasmic reticulum. Receptor for KLRB1 that protects target cells against natural killer cell-mediated lysis. Inhibits osteoclast formation. Inhibits bone resorption. Modulates the release of interferon-gamma. Binds high molecular weight sulfated glycosaminoglycans. The chain is C-type lectin domain family 2 member D (CLEC2D) from Homo sapiens (Human).